A 158-amino-acid polypeptide reads, in one-letter code: SsrA-binding protein (158 aa).

Over residues 136–151 (KRADSKSRDWARDKQR) the composition is skewed to basic and acidic residues. The segment at 136–158 (KRADSKSRDWARDKQRIMKHSTR) is disordered.

This sequence belongs to the SmpB family.

The protein resides in the cytoplasm. Required for rescue of stalled ribosomes mediated by trans-translation. Binds to transfer-messenger RNA (tmRNA), required for stable association of tmRNA with ribosomes. tmRNA and SmpB together mimic tRNA shape, replacing the anticodon stem-loop with SmpB. tmRNA is encoded by the ssrA gene; the 2 termini fold to resemble tRNA(Ala) and it encodes a 'tag peptide', a short internal open reading frame. During trans-translation Ala-aminoacylated tmRNA acts like a tRNA, entering the A-site of stalled ribosomes, displacing the stalled mRNA. The ribosome then switches to translate the ORF on the tmRNA; the nascent peptide is terminated with the 'tag peptide' encoded by the tmRNA and targeted for degradation. The ribosome is freed to recommence translation, which seems to be the essential function of trans-translation. The protein is SsrA-binding protein of Photobacterium profundum (strain SS9).